The sequence spans 494 residues: Gram-negative bacteria-binding protein 1 (494 aa).

The N-terminal stretch at 1–19 (MPGLCIGILLLIGFGCTTA) is a signal peptide. The CBM39 domain occupies 20–120 (YKIPTPTVEL…QPLPVCNLGG (101 aa)). N-linked (GlcNAc...) asparagine glycans are attached at residues Asn56 and Asn81. The disordered stretch occupies residues 126 to 160 (GCSPGDDDFTDDNQLSTEDSALEPTAPSVCEPSES). Residues 135–494 (TDDNQLSTED…DYVRVFATDN (360 aa)) enclose the GH16 domain. N-linked (GlcNAc...) asparagine glycosylation occurs at Asn185.

The protein belongs to the insect beta-1,3-glucan binding protein family.

Its subcellular location is the cell membrane. Functionally, plays a key role in innate immunity by acting as a pattern recognition receptor for beta-1,3-glucan from fungi and lipopolysaccharide from Gram-negative bacteria. Upon recognition of invading microorganism-derived products, acts upstream of protease spz processing enzyme SPE to activate the Toll pathway and to induce the expression of antimicrobial peptides drosomycin, cecropin and attacin. This Drosophila melanogaster (Fruit fly) protein is Gram-negative bacteria-binding protein 1.